Consider the following 258-residue polypeptide: L-aminoadipate-semialdehyde dehydrogenase-phosphopantetheinyl transferase (258 aa).

The protein belongs to the P-Pant transferase superfamily. AcpS family.

It is found in the cytoplasm. It localises to the nucleus. The enzyme catalyses apo-[ACP] + CoA = holo-[ACP] + adenosine 3',5'-bisphosphate + H(+). Its function is as follows. Catalyzes the transfer of a 4'-phosphopantetheine moiety from coenzyme A to a serine residue of acceptor proteins, such as alpha-aminoadipate reductase. Necessary for alpha-aminoadipate reductase activity. In Schizosaccharomyces pombe (strain 972 / ATCC 24843) (Fission yeast), this protein is L-aminoadipate-semialdehyde dehydrogenase-phosphopantetheinyl transferase (lys7).